Consider the following 180-residue polypeptide: ATP synthase subunit b (180 aa).

Residues 26–48 traverse the membrane as a helical segment; that stretch reads SMILFWKAVNTVILLGLVYYFGG.

It belongs to the ATPase B chain family. As to quaternary structure, F-type ATPases have 2 components, F(1) - the catalytic core - and F(0) - the membrane proton channel. F(1) has five subunits: alpha(3), beta(3), gamma(1), delta(1), epsilon(1). F(0) has three main subunits: a(1), b(2) and c(10-14). The alpha and beta chains form an alternating ring which encloses part of the gamma chain. F(1) is attached to F(0) by a central stalk formed by the gamma and epsilon chains, while a peripheral stalk is formed by the delta and b chains.

The protein localises to the cell inner membrane. Its function is as follows. F(1)F(0) ATP synthase produces ATP from ADP in the presence of a proton or sodium gradient. F-type ATPases consist of two structural domains, F(1) containing the extramembraneous catalytic core and F(0) containing the membrane proton channel, linked together by a central stalk and a peripheral stalk. During catalysis, ATP synthesis in the catalytic domain of F(1) is coupled via a rotary mechanism of the central stalk subunits to proton translocation. Component of the F(0) channel, it forms part of the peripheral stalk, linking F(1) to F(0). In Sulfurihydrogenibium sp. (strain YO3AOP1), this protein is ATP synthase subunit b.